A 361-amino-acid polypeptide reads, in one-letter code: Ataxin-3 (361 aa).

A Peptide (Met-Gly) (interchain with G-Cter in ubiquitin) cross-link involves residue methionine 1. The Josephin domain occupies 1–180 (MESIFHEKQE…DCEADQLLQM (180 aa)). Catalysis depends on cysteine 14, which acts as the Nucleophile. The Proton acceptor role is filled by histidine 119. Asparagine 134 is a catalytic residue. A Glycyl lysine isopeptide (Lys-Gly) (interchain with G-Cter in ubiquitin) cross-link involves residue lysine 200. Serine 219 is subject to Phosphoserine. 2 consecutive UIM domains span residues 224–243 (EDEE…IDME) and 244–263 (DEEA…SSRN). Over residues 258–278 (QGSSRNISQDMTQTSGTNLTS) the composition is skewed to polar residues. The tract at residues 258–338 (QGSSRNISQD…DLGDAMSEED (81 aa)) is disordered. Phosphoserine occurs at positions 265 and 272. The span at 279–293 (EELRKRREAYFEKQQ) shows a compositional bias: basic and acidic residues. Low complexity predominate over residues 294 to 305 (QKQQQQQQQQQQ). A compositionally biased stretch (polar residues) spans 306 to 325 (GDLSGQSSHPCERPATSSGA). At serine 328 the chain carries Phosphoserine. The 19-residue stretch at 331 to 349 (GDAMSEEDMLQAAVTMSLE) folds into the UIM 3 domain.

Interacts with STUB1/CHIP (when monoubiquitinated). Interacts with DNA repair proteins RAD23A and RAD23B. Interacts with BECN1 (via its poly-Gln domain). Interacts with PRKN, UBR2, VCP and tubulin. Short isoform 1 interacts with CASP7. In terms of processing, monoubiquitinated N-terminally by UBE2W, possibly leading to activate the deubiquitinating enzyme activity. Ubiquitous.

Its subcellular location is the nucleus matrix. It localises to the nucleus. The protein resides in the lysosome membrane. It carries out the reaction Thiol-dependent hydrolysis of ester, thioester, amide, peptide and isopeptide bonds formed by the C-terminal Gly of ubiquitin (a 76-residue protein attached to proteins as an intracellular targeting signal).. Deubiquitinating enzyme involved in protein homeostasis maintenance, transcription, cytoskeleton regulation, myogenesis and degradation of misfolded chaperone substrates. Binds long polyubiquitin chains and trims them, while it has weak or no activity against chains of 4 or less ubiquitins. Involved in degradation of misfolded chaperone substrates via its interaction with STUB1/CHIP: recruited to monoubiquitinated STUB1/CHIP, and restricts the length of ubiquitin chain attached to STUB1/CHIP substrates and preventing further chain extension. Interacts with key regulators of transcription and represses transcription: acts as a histone-binding protein that regulates transcription. Acts as a negative regulator of mTORC1 signaling in response to amino acid deprivation by mediating deubiquitination of RHEB, thereby promoting RHEB inactivation by the TSC-TBC complex. Regulates autophagy via the deubiquitination of 'Lys-402' of BECN1 leading to the stabilization of BECN1. The sequence is that of Ataxin-3 from Homo sapiens (Human).